Reading from the N-terminus, the 217-residue chain is MQIFLDSTDTKVIADLASTGLVDGVTTNPTLIAKSGRPMLEVIAEICDLVPGPISAEVAATTHEAMVAEGRKLAAIAPNVVVKIPLTRDGLIACAAFAGEGISTNVTLCFSPTQALLAAKAGATYVSPFIGRLDDYGFDGMDLIRDIRAIYDNYGYETEILAASVRNVTHVKDAAIVGADVVTIPPATFSDLFKHPLTDKGLEQFLKDWAGTGQSIL.

Residue Lys83 is the Schiff-base intermediate with substrate of the active site.

It belongs to the transaldolase family. Type 3B subfamily.

It localises to the cytoplasm. The catalysed reaction is D-sedoheptulose 7-phosphate + D-glyceraldehyde 3-phosphate = D-erythrose 4-phosphate + beta-D-fructose 6-phosphate. It participates in carbohydrate degradation; pentose phosphate pathway; D-glyceraldehyde 3-phosphate and beta-D-fructose 6-phosphate from D-ribose 5-phosphate and D-xylulose 5-phosphate (non-oxidative stage): step 2/3. Its function is as follows. Transaldolase is important for the balance of metabolites in the pentose-phosphate pathway. This is Probable transaldolase from Caulobacter sp. (strain K31).